A 267-amino-acid polypeptide reads, in one-letter code: Thiamine pyrophosphokinase 1 (267 aa).

The protein belongs to the thiamine pyrophosphokinase family. In terms of tissue distribution, expressed in roots, leaves and flowers.

The protein resides in the cytoplasm. Its subcellular location is the cytosol. It carries out the reaction thiamine + ATP = thiamine diphosphate + AMP + H(+). The protein operates within cofactor biosynthesis; thiamine diphosphate biosynthesis; thiamine diphosphate from thiamine: step 1/1. In terms of biological role, catalyzes the phosphorylation of thiamine to thiamine pyrophosphate (TPP). TPP is an active cofactor for enzymes involved in glycolysis and energy production. Plant leaves require high levels of TPP for photosynthesis and carbohydrate metabolism. This Arabidopsis thaliana (Mouse-ear cress) protein is Thiamine pyrophosphokinase 1.